Reading from the N-terminus, the 573-residue chain is DNA damage-binding protein CMR1 (573 aa).

Residues 27-94 form a disordered region; the sequence is DSLNDSISRE…EMEKAEERKR (68 aa). Residues 72–152 are a coiled coil; that stretch reads TMEDSEEDKQ…EEIKKEEDST (81 aa). Over residues 79 to 94 the composition is skewed to basic and acidic residues; it reads DKQMREEMEKAEERKR. WD repeat units follow at residues 218-259, 268-308, 319-357, 361-401, 418-456, 495-538, and 542-573; these read ITQQ…DDET, PHGK…STEV, DYPL…KQGE, LHDK…QKNS, HSRL…KLPL, GRWV…LCHL, and DRMT…YLFE.

Belongs to the WD repeat DDB2/WDR76 family.

DNA-binding protein that binds to both single- and double-stranded DNA. Binds preferentially to UV-damaged DNA. May be involved in DNA-metabolic processes. The protein is DNA damage-binding protein CMR1 of Meyerozyma guilliermondii (strain ATCC 6260 / CBS 566 / DSM 6381 / JCM 1539 / NBRC 10279 / NRRL Y-324) (Yeast).